We begin with the raw amino-acid sequence, 479 residues long: Cardiolipin synthase A (479 aa).

2 consecutive transmembrane segments (helical) span residues 8-28 and 38-58; these read FFGYLIGLIHLLGIIAALHAV and IAWALSLLFIPYFTLIPYLIF. 2 PLD phosphodiesterase domains span residues 218-245 and 392-419; these read VNFRNHRKIVVVDGLRGFLGGHNVGDEY and QPGFLHQKVVLVDDEVSAIGSANLDNRS. Active-site residues include His-223, Lys-225, Asp-230, His-397, Lys-399, and Asp-404.

The protein belongs to the phospholipase D family. Cardiolipin synthase subfamily. ClsA sub-subfamily.

It localises to the cell inner membrane. It catalyses the reaction 2 a 1,2-diacyl-sn-glycero-3-phospho-(1'-sn-glycerol) = a cardiolipin + glycerol. Catalyzes the reversible phosphatidyl group transfer from one phosphatidylglycerol molecule to another to form cardiolipin (CL) (diphosphatidylglycerol) and glycerol. The protein is Cardiolipin synthase A of Pseudomonas entomophila (strain L48).